Here is a 394-residue protein sequence, read N- to C-terminus: SVGFKAGVKDYRLTYYTPEYETLATDILAAFRVTPQPGVPPEEAGAAVAAESSTGTWTTVWTDGLTSLDRYKGRCYHIEPVAGEENQYIAYVAYPLDLFEEGSVTNMFTSIVGNVFGFKALRALRLEDLRIPPAYSKTFQGPPHGIQVERDKLNKYGRPLLGCTIKPKLGLSAKNYGRAVYECLRGGLDFTKDDENVNSQPFMRWRDRFLFCAEALYKAQAETGEIKGHYLNATAGTSEEMIKRAVCARELGVPIVMHDYLTGGFTANTSLAHYCRDNGLLLHIHRAMHAVIDRQRNHGIHFRVLAKALRMSGGDHIHSGTVVGKLEGERDVTLGFVDLLRDDFIEKDRSRGIYFTQDWVSMPGVLPVASGGIHVWHMPALTEIFGDDSVLQFG.

Residue lysine 5 is modified to N6,N6,N6-trimethyllysine. 2 residues coordinate substrate: asparagine 114 and threonine 164. The active-site Proton acceptor is lysine 166. Lysine 168 contributes to the substrate binding site. 3 residues coordinate Mg(2+): lysine 192, aspartate 194, and glutamate 195. An N6-carboxylysine modification is found at lysine 192. Residue histidine 285 is the Proton acceptor of the active site. Substrate-binding residues include arginine 286, histidine 318, and serine 370.

The protein belongs to the RuBisCO large chain family. Type I subfamily. Heterohexadecamer of 8 large chains and 8 small chains. Mg(2+) serves as cofactor.

It localises to the plastid. The protein localises to the chloroplast. The enzyme catalyses 2 (2R)-3-phosphoglycerate + 2 H(+) = D-ribulose 1,5-bisphosphate + CO2 + H2O. It catalyses the reaction D-ribulose 1,5-bisphosphate + O2 = 2-phosphoglycolate + (2R)-3-phosphoglycerate + 2 H(+). In terms of biological role, ruBisCO catalyzes two reactions: the carboxylation of D-ribulose 1,5-bisphosphate, the primary event in carbon dioxide fixation, as well as the oxidative fragmentation of the pentose substrate in the photorespiration process. Both reactions occur simultaneously and in competition at the same active site. The protein is Ribulose bisphosphate carboxylase large chain (rbcL) of Nymphaea odorata (White water lily).